Here is a 457-residue protein sequence, read N- to C-terminus: Proton extrusion protein PxcA (457 aa).

Helical transmembrane passes span 239–259 (FILLLIIVPLLTHQLTKTFFL), 332–352 (INAISNVFADIFSLIAFGVVI), 368–390 (GILYSLSDSAKAFLIILFTDMFV), and 417–437 (FNFLFIATFPVILDTVLKYWI).

This sequence belongs to the CemA family.

It is found in the cell inner membrane. In terms of biological role, required for H(+) efflux immediately after light irradiation to form a rapid H(+) concentration gradient across the thylakoid membranes. Together with PxcL, contributes to transient H(+) uptake following dark to light transition. The sequence is that of Proton extrusion protein PxcA from Gloeothece citriformis (strain PCC 7424) (Cyanothece sp. (strain PCC 7424)).